A 336-amino-acid chain; its full sequence is tRNA N6-adenosine threonylcarbamoyltransferase (336 aa).

The Fe cation site is built by His110 and His114. Substrate is bound by residues 133 to 137, Asp166, Gly179, and Asn271; that span reads LVSGK. Residue Asp300 coordinates Fe cation.

Belongs to the KAE1 / TsaD family. It depends on Fe(2+) as a cofactor.

The protein localises to the cytoplasm. The catalysed reaction is L-threonylcarbamoyladenylate + adenosine(37) in tRNA = N(6)-L-threonylcarbamoyladenosine(37) in tRNA + AMP + H(+). Its function is as follows. Required for the formation of a threonylcarbamoyl group on adenosine at position 37 (t(6)A37) in tRNAs that read codons beginning with adenine. Is involved in the transfer of the threonylcarbamoyl moiety of threonylcarbamoyl-AMP (TC-AMP) to the N6 group of A37, together with TsaE and TsaB. TsaD likely plays a direct catalytic role in this reaction. The polypeptide is tRNA N6-adenosine threonylcarbamoyltransferase (Buchnera aphidicola subsp. Acyrthosiphon pisum (strain 5A)).